The following is a 114-amino-acid chain: Histone H2B (114 aa).

A disordered region spans residues 1-22 (MAKTPSKKAAKAPKKAGSKRNK). An N6-acetyllysine modification is found at K3. K110 participates in a covalent cross-link: Glycyl lysine isopeptide (Lys-Gly) (interchain with G-Cter in ubiquitin).

Belongs to the histone H2B family. In terms of assembly, the nucleosome is a histone octamer containing two molecules each of H2A, H2B, H3 and H4 assembled in one H3-H4 heterotetramer and two H2A-H2B heterodimers. The octamer wraps approximately 147 bp of DNA. Monoubiquitination of Lys-110 gives a specific tag for epigenetic transcriptional activation and is also prerequisite for histone H3 'Lys-4' and 'Lys-79' methylation.

The protein localises to the nucleus. Its subcellular location is the chromosome. Functionally, core component of nucleosome. Nucleosomes wrap and compact DNA into chromatin, limiting DNA accessibility to the cellular machineries which require DNA as a template. Histones thereby play a central role in transcription regulation, DNA repair, DNA replication and chromosomal stability. DNA accessibility is regulated via a complex set of post-translational modifications of histones, also called histone code, and nucleosome remodeling. In Olisthodiscus luteus (Marine phytoflagellate), this protein is Histone H2B.